A 1937-amino-acid polypeptide reads, in one-letter code: Myosin-2 (1937 aa).

The Myosin N-terminal SH3-like domain maps to 33–82 (DAKTSVFVAEPKESFVKGTIQSREGGKVTVKTDAGATLTVKEDQVFPMNP). Thr64 and Thr69 each carry phosphothreonine. A Myosin motor domain is found at 86-780 (DKIEDMAMMT…LLGLLEEMRD (695 aa)). Position 130 is an N6,N6,N6-trimethyllysine (Lys130). 179 to 186 (GESGAGKT) is an ATP binding site. Tyr387 carries the post-translational modification Phosphotyrosine. Thr417 is subject to Phosphothreonine. Position 623 is a phosphoserine (Ser623). The interval 657 to 679 (LNKLMTNLRSTHPHFVRCIIPNE) is actin-binding. Residue His755 is modified to Pros-methylhistidine. Positions 759 to 773 (KFGHTKVFFKAGLLG) are actin-binding. The IQ domain maps to 783 to 812 (LAQIITRTQARCRGFLARVEYQKMVERRES). Residues 841–1937 (LLKSAETEKE…EVHTKIISEE (1097 aa)) adopt a coiled-coil conformation. Position 1094 is a phosphoserine (Ser1094). Disordered stretches follow at residues 1124–1145 (IEAE…SREL) and 1151–1170 (RLEE…KKRE). The span at 1126–1145 (AERASRAKAEKQRSDLSREL) shows a compositional bias: basic and acidic residues. Residues Ser1160 and Ser1235 each carry the phosphoserine modification. Thr1239 carries the phosphothreonine modification. Ser1241 is subject to Phosphoserine. Residue Thr1253 is modified to Phosphothreonine. Phosphoserine is present on Ser1259. Thr1284 carries the phosphothreonine modification. 3 positions are modified to phosphoserine: Ser1290, Ser1301, and Ser1304. Residue Tyr1462 is modified to Phosphotyrosine. Thr1465 carries the phosphothreonine modification. Ser1472 bears the Phosphoserine mark. Position 1490 is a phosphotyrosine (Tyr1490). Ser1493 carries the phosphoserine modification. Thr1499 bears the Phosphothreonine mark. Ser1512 carries the phosphoserine modification. Phosphothreonine is present on Thr1515. A phosphoserine mark is found at Ser1540, Ser1552, Ser1572, Ser1712, and Ser1724. Phosphothreonine occurs at positions 1728 and 1734. A Phosphoserine modification is found at Ser1737. Residues 1883 to 1913 (QAEEAEEQSNTNLSKFRKLQHELEEAEERAD) form a disordered region.

The protein belongs to the TRAFAC class myosin-kinesin ATPase superfamily. Myosin family. Muscle myosin is a hexameric protein that consists of 2 heavy chain subunits (MHC), 2 alkali light chain subunits (MLC) and 2 regulatory light chain subunits (MLC-2). Interacts with GCSAM.

It is found in the cytoplasm. Its subcellular location is the myofibril. Functionally, myosins are actin-based motor molecules with ATPase activity essential for muscle contraction. The sequence is that of Myosin-2 (MYH2) from Equus caballus (Horse).